The following is a 602-amino-acid chain: Elongation factor 4 (602 aa).

The 183-residue stretch at asparagine 7–glutamine 189 folds into the tr-type G domain. Residues aspartate 19 to threonine 24 and asparagine 136 to aspartate 139 contribute to the GTP site.

This sequence belongs to the TRAFAC class translation factor GTPase superfamily. Classic translation factor GTPase family. LepA subfamily.

It is found in the cell inner membrane. The enzyme catalyses GTP + H2O = GDP + phosphate + H(+). Its function is as follows. Required for accurate and efficient protein synthesis under certain stress conditions. May act as a fidelity factor of the translation reaction, by catalyzing a one-codon backward translocation of tRNAs on improperly translocated ribosomes. Back-translocation proceeds from a post-translocation (POST) complex to a pre-translocation (PRE) complex, thus giving elongation factor G a second chance to translocate the tRNAs correctly. Binds to ribosomes in a GTP-dependent manner. This chain is Elongation factor 4, found in Protochlamydia amoebophila (strain UWE25).